Here is a 449-residue protein sequence, read N- to C-terminus: Hyaluronidase-1 (449 aa).

The first 23 residues, 1–23, serve as a signal peptide directing secretion; the sequence is MYHIWIKFLAAWIFLKRFNGVHV. Intrachain disulfides connect cysteine 47–cysteine 340 and cysteine 211–cysteine 227. 3 N-linked (GlcNAc...) asparagine glycosylation sites follow: asparagine 67, asparagine 103, and asparagine 111. Glutamate 135 functions as the Proton donor in the catalytic mechanism. N-linked (GlcNAc...) asparagine glycosylation is present at asparagine 153. Residue asparagine 357 is glycosylated (N-linked (GlcNAc...) asparagine). Cystine bridges form between cysteine 365/cysteine 376, cysteine 370/cysteine 427, and cysteine 429/cysteine 438. Residue asparagine 401 is glycosylated (N-linked (GlcNAc...) asparagine). Residues 427–438 form the EGF-like domain; the sequence is CQCYQGWKGLYC.

Belongs to the glycosyl hydrolase 56 family. Monomer. In terms of tissue distribution, expressed by the venom gland.

It is found in the secreted. The enzyme catalyses Random hydrolysis of (1-&gt;4)-linkages between N-acetyl-beta-D-glucosamine and D-glucuronate residues in hyaluronate.. Functionally, snake venom endo-hyaluronidase that degrades hyaluronan to smaller oligosaccharide fragments. In venom, it is not toxic by itself, but increases the diffusion of other venom proteins by degrading the extracellular matrix. In addition, it displays antiedematogenic activity. This chain is Hyaluronidase-1, found in Cerastes cerastes (Horned desert viper).